The following is a 178-amino-acid chain: Nucleolar protein 16 (178 aa).

Residues 1–31 (MPKAKGKTRRQKFGYSVNRKRLNRNARRKAA) are disordered. Position 8 is a phosphothreonine (Thr-8). Ser-16 is subject to Phosphoserine. Lys-74 participates in a covalent cross-link: Glycyl lysine isopeptide (Lys-Gly) (interchain with G-Cter in SUMO2). Residue Lys-90 is modified to N6-acetyllysine. The residue at position 144 (Thr-144) is a Phosphothreonine. Residues Phe-166, Leu-167, Lys-172, and Arg-173 each participate in a glycyl lysine isopeptide (Lys-Gly) (interchain with G-Cter in SUMO2) cross-link.

The protein belongs to the NOP16 family.

It localises to the nucleus. It is found in the nucleolus. This is Nucleolar protein 16 (NOP16) from Homo sapiens (Human).